The chain runs to 1253 residues: Cytoplasmic FMR1-interacting protein 1 homolog (1253 aa).

Belongs to the CYFIP family.

It is found in the cytoplasm. The protein resides in the perinuclear region. The protein localises to the cell projection. It localises to the lamellipodium. Its subcellular location is the ruffle. It is found in the synapse. The protein resides in the synaptosome. Functionally, involved in formation of membrane ruffles and lamellipodia protrusions and in axon outgrowth. Binds to F-actin but not to RNA. This is Cytoplasmic FMR1-interacting protein 1 homolog from Danio rerio (Zebrafish).